We begin with the raw amino-acid sequence, 513 residues long: ATP synthase subunit alpha (513 aa).

169–176 is an ATP binding site; that stretch reads GDRQTGKT.

It belongs to the ATPase alpha/beta chains family. In terms of assembly, F-type ATPases have 2 components, CF(1) - the catalytic core - and CF(0) - the membrane proton channel. CF(1) has five subunits: alpha(3), beta(3), gamma(1), delta(1), epsilon(1). CF(0) has three main subunits: a(1), b(2) and c(9-12). The alpha and beta chains form an alternating ring which encloses part of the gamma chain. CF(1) is attached to CF(0) by a central stalk formed by the gamma and epsilon chains, while a peripheral stalk is formed by the delta and b chains.

Its subcellular location is the cell inner membrane. It catalyses the reaction ATP + H2O + 4 H(+)(in) = ADP + phosphate + 5 H(+)(out). In terms of biological role, produces ATP from ADP in the presence of a proton gradient across the membrane. The alpha chain is a regulatory subunit. The chain is ATP synthase subunit alpha from Cronobacter sakazakii (strain ATCC BAA-894) (Enterobacter sakazakii).